The following is a 206-amino-acid chain: MAKFDVYDLSKKKVGELDLADAVFAGEVNEHLFYEVVKAKLASDRSGTHAVKNRSLVSGGGKKPWKQKHTGRARQGSTRASQWVGGGKAMGPKPRDYSYDVPKKVRKAALRSALALRSKDQKLVIVQEWKPEGPKTAAAAKVLAALGAKKALVVDDAANLALARSVRNLAGSDFLAVEGLNVYDILRHDALVLTADTAKKLEASLS.

A disordered region spans residues 48–97 (THAVKNRSLVSGGGKKPWKQKHTGRARQGSTRASQWVGGGKAMGPKPRDY). Over residues 63–72 (KPWKQKHTGR) the composition is skewed to basic residues.

The protein belongs to the universal ribosomal protein uL4 family. Part of the 50S ribosomal subunit.

Functionally, one of the primary rRNA binding proteins, this protein initially binds near the 5'-end of the 23S rRNA. It is important during the early stages of 50S assembly. It makes multiple contacts with different domains of the 23S rRNA in the assembled 50S subunit and ribosome. In terms of biological role, forms part of the polypeptide exit tunnel. In Anaeromyxobacter dehalogenans (strain 2CP-C), this protein is Large ribosomal subunit protein uL4.